Reading from the N-terminus, the 529-residue chain is hal-like protein DDB_G0273787/DDB_G0273081 (529 aa).

Positions alanine 151–glycine 153 form a cross-link, 5-imidazolinone (Ala-Gly). Residue serine 152 is modified to 2,3-didehydroalanine (Ser).

It belongs to the PAL/histidase family. In terms of processing, contains an active site 4-methylidene-imidazol-5-one (MIO), which is formed autocatalytically by cyclization and dehydration of residues Ala-Ser-Gly.

It is found in the cytoplasm. The catalysed reaction is L-histidine = trans-urocanate + NH4(+). Its pathway is amino-acid degradation; L-histidine degradation into L-glutamate; N-formimidoyl-L-glutamate from L-histidine: step 1/3. This is hal-like protein DDB_G0273787/DDB_G0273081 from Dictyostelium discoideum (Social amoeba).